The sequence spans 201 residues: Large ribosomal subunit protein uL4 (201 aa).

Residues 45–72 (AQKTRAEVTGSGKKPWRQKGTGRARAGS) form a disordered region.

It belongs to the universal ribosomal protein uL4 family. In terms of assembly, part of the 50S ribosomal subunit.

Functionally, one of the primary rRNA binding proteins, this protein initially binds near the 5'-end of the 23S rRNA. It is important during the early stages of 50S assembly. It makes multiple contacts with different domains of the 23S rRNA in the assembled 50S subunit and ribosome. Forms part of the polypeptide exit tunnel. This chain is Large ribosomal subunit protein uL4, found in Shewanella frigidimarina (strain NCIMB 400).